Here is a 123-residue protein sequence, read N- to C-terminus: Large ribosomal subunit protein uL14 (123 aa).

It belongs to the universal ribosomal protein uL14 family. In terms of assembly, part of the 50S ribosomal subunit. Forms a cluster with proteins L3 and L19. In the 70S ribosome, L14 and L19 interact and together make contacts with the 16S rRNA in bridges B5 and B8.

In terms of biological role, binds to 23S rRNA. Forms part of two intersubunit bridges in the 70S ribosome. The sequence is that of Large ribosomal subunit protein uL14 from Pectobacterium atrosepticum (strain SCRI 1043 / ATCC BAA-672) (Erwinia carotovora subsp. atroseptica).